Here is a 342-residue protein sequence, read N- to C-terminus: S-adenosylmethionine:tRNA ribosyltransferase-isomerase (342 aa).

This sequence belongs to the QueA family. As to quaternary structure, monomer.

The protein resides in the cytoplasm. It catalyses the reaction 7-aminomethyl-7-carbaguanosine(34) in tRNA + S-adenosyl-L-methionine = epoxyqueuosine(34) in tRNA + adenine + L-methionine + 2 H(+). It functions in the pathway tRNA modification; tRNA-queuosine biosynthesis. Functionally, transfers and isomerizes the ribose moiety from AdoMet to the 7-aminomethyl group of 7-deazaguanine (preQ1-tRNA) to give epoxyqueuosine (oQ-tRNA). This is S-adenosylmethionine:tRNA ribosyltransferase-isomerase from Geobacillus sp. (strain WCH70).